The sequence spans 576 residues: Putative pentatricopeptide repeat-containing protein At5g47460 (576 aa).

14 PPR repeats span residues 20 to 53, 54 to 88, 89 to 119, 120 to 154, 155 to 189, 191 to 225, 226 to 252, 253 to 287, 288 to 318, 319 to 353, 354 to 384, 385 to 419, 421 to 452, and 458 to 488; these read SSNS…GEKP, DASP…GFVS, NTRL…MPDP, DVIS…DVFP, NEFS…GLEK, NVVV…DTVS, WNAI…MPNP, DTVT…NSSS, WNTI…GVRF, DEYS…GLDS, RVVV…MPRK, NLIV…RFLK, DRFT…MINE, and SVEH…FGFG. The type E motif stretch occupies residues 493–570; that stretch reads AWRALLGACS…EVGSSWIDSR (78 aa).

It belongs to the PPR family. PCMP-E subfamily.

The sequence is that of Putative pentatricopeptide repeat-containing protein At5g47460 (PCMP-E103) from Arabidopsis thaliana (Mouse-ear cress).